The sequence spans 634 residues: 1-deoxy-D-xylulose-5-phosphate synthase (634 aa).

Thiamine diphosphate-binding positions include histidine 73 and 114 to 116 (GHS). Aspartate 145 is a binding site for Mg(2+). Residues 146–147 (GA), asparagine 174, tyrosine 285, and glutamate 365 contribute to the thiamine diphosphate site. Mg(2+) is bound at residue asparagine 174.

It belongs to the transketolase family. DXPS subfamily. Homodimer. It depends on Mg(2+) as a cofactor. The cofactor is thiamine diphosphate.

The catalysed reaction is D-glyceraldehyde 3-phosphate + pyruvate + H(+) = 1-deoxy-D-xylulose 5-phosphate + CO2. The protein operates within metabolic intermediate biosynthesis; 1-deoxy-D-xylulose 5-phosphate biosynthesis; 1-deoxy-D-xylulose 5-phosphate from D-glyceraldehyde 3-phosphate and pyruvate: step 1/1. Functionally, catalyzes the acyloin condensation reaction between C atoms 2 and 3 of pyruvate and glyceraldehyde 3-phosphate to yield 1-deoxy-D-xylulose-5-phosphate (DXP). The polypeptide is 1-deoxy-D-xylulose-5-phosphate synthase (Desulforudis audaxviator (strain MP104C)).